The primary structure comprises 83 residues: Evasin P1090 (83 aa).

Positions 1–24 are cleaved as a signal peptide; it reads MEVKIFAFLQIAVLIAFSLHLASA. Intrachain disulfides connect Cys-44–Cys-63, Cys-48–Cys-65, and Cys-59–Cys-76. The N-linked (GlcNAc...) asparagine glycan is linked to Asn-47. Residue Asn-70 is glycosylated (N-linked (GlcNAc...) asparagine).

The protein localises to the secreted. Functionally, salivary chemokine-binding protein which binds to host chemokines CXCL1, CXCL2, CXCL3, CXCL5, CXCL6, CXCL10, CXCL11 and CXCL13. This is Evasin P1090 from Ixodes ricinus (Common tick).